A 466-amino-acid chain; its full sequence is Ribulose bisphosphate carboxylase large chain (466 aa).

Lys-5 carries the post-translational modification N6,N6,N6-trimethyllysine. Residues Asn-114 and Thr-164 each coordinate substrate. Residue Lys-166 is the Proton acceptor of the active site. Residue Lys-168 coordinates substrate. Lys-192, Asp-194, and Glu-195 together coordinate Mg(2+). An N6-carboxylysine modification is found at Lys-192. The active-site Proton acceptor is His-285. Substrate is bound by residues Arg-286, His-318, and Ser-370.

Belongs to the RuBisCO large chain family. Type I subfamily. As to quaternary structure, heterohexadecamer of 8 large chains and 8 small chains; disulfide-linked. The disulfide link is formed within the large subunit homodimers. Requires Mg(2+) as cofactor. In terms of processing, the disulfide bond which can form in the large chain dimeric partners within the hexadecamer appears to be associated with oxidative stress and protein turnover.

The protein resides in the plastid. It localises to the chloroplast. The catalysed reaction is 2 (2R)-3-phosphoglycerate + 2 H(+) = D-ribulose 1,5-bisphosphate + CO2 + H2O. It catalyses the reaction D-ribulose 1,5-bisphosphate + O2 = 2-phosphoglycolate + (2R)-3-phosphoglycerate + 2 H(+). Its function is as follows. RuBisCO catalyzes two reactions: the carboxylation of D-ribulose 1,5-bisphosphate, the primary event in carbon dioxide fixation, as well as the oxidative fragmentation of the pentose substrate in the photorespiration process. Both reactions occur simultaneously and in competition at the same active site. In Averrhoa carambola (Star fruit), this protein is Ribulose bisphosphate carboxylase large chain.